An 808-amino-acid polypeptide reads, in one-letter code: Leucine-rich repeat-containing protein 41 (808 aa).

Residues 45–54 form an interaction with Elongin BC complex region; that stretch reads ALFELCGRAV. 3 positions are modified to phosphoserine: serine 155, serine 276, and serine 326. Disordered regions lie at residues 269 to 289 and 304 to 404; these read ASRG…SRRP and TRRK…GSGA. Phosphothreonine is present on threonine 327. Residues 357–379 are compositionally biased toward low complexity; that stretch reads PSSAPTAASSSTSSKRAPASSVS. Residue serine 369 is modified to Phosphoserine. Basic residues predominate over residues 383-397; sequence PLKRFKRATGKKGPR. 7 LRR repeats span residues 483–503, 514–526, 527–551, 609–631, 632–655, 697–724, and 727–748; these read WVSL…IFRL, AGCR…LSDL, FSPL…VLSI, SGSL…FGLV, LQTL…LADC, NSTL…VFSE, and SSSL…LLEF.

In terms of assembly, part of an E3 ubiquitin-protein ligase complex with Elongin BC (ELOB and ELOC), RBX1 and CUL5. Component of a probable ECS(LRRC41) complex which contains CUL5, RNF7/RBX2, Elongin BC and LRRC41. Interacts with CUL5, RNF7, ELOB and ELOC.

Its pathway is protein modification; protein ubiquitination. Functionally, probable substrate recognition component of an ECS (Elongin BC-CUL2/5-SOCS-box protein) E3 ubiquitin ligase complex which mediates the ubiquitination and subsequent proteasomal degradation of target proteins. In Rattus norvegicus (Rat), this protein is Leucine-rich repeat-containing protein 41 (Lrrc41).